The following is a 405-amino-acid chain: Elongation factor Tu (405 aa).

One can recognise a tr-type G domain in the interval 10 to 215; sequence KPHVNVGTIG…AVDSYIPTPE (206 aa). A G1 region spans residues 19-26; it reads GHVDHGKT. 19-26 contacts GTP; the sequence is GHVDHGKT. Residue Thr-26 participates in Mg(2+) binding. The interval 61–65 is G2; the sequence is GITIN. The tract at residues 82–85 is G3; it reads DCPG. GTP contacts are provided by residues 82–86 and 137–140; these read DCPGH and NKVD. Residues 137 to 140 are G4; it reads NKVD. Residues 175–177 form a G5 region; the sequence is SAL.

Belongs to the TRAFAC class translation factor GTPase superfamily. Classic translation factor GTPase family. EF-Tu/EF-1A subfamily. Monomer.

Its subcellular location is the cytoplasm. It carries out the reaction GTP + H2O = GDP + phosphate + H(+). In terms of biological role, GTP hydrolase that promotes the GTP-dependent binding of aminoacyl-tRNA to the A-site of ribosomes during protein biosynthesis. The chain is Elongation factor Tu from Deinonema sp.